Consider the following 66-residue polypeptide: Large ribosomal subunit protein bL35 (66 aa).

Belongs to the bacterial ribosomal protein bL35 family.

This Borrelia garinii subsp. bavariensis (strain ATCC BAA-2496 / DSM 23469 / PBi) (Borreliella bavariensis) protein is Large ribosomal subunit protein bL35.